A 90-amino-acid polypeptide reads, in one-letter code: DNA-binding protein HU-alpha (90 aa).

The protein belongs to the bacterial histone-like protein family. In terms of assembly, heterodimer of an alpha and a beta chain.

Histone-like DNA-binding protein which is capable of wrapping DNA to stabilize it, and thus to prevent its denaturation under extreme environmental conditions. The chain is DNA-binding protein HU-alpha (hupA) from Serratia marcescens.